We begin with the raw amino-acid sequence, 1964 residues long: Probable helicase with zinc finger domain (1964 aa).

A C3H1-type zinc finger spans residues serine 178–glutamate 206. Residue serine 248 is modified to Phosphoserine. Glycine 668–threonine 675 serves as a coordination point for ATP. The DEAA box signature appears at aspartate 794–alanine 797. Residues histidine 1116 to proline 1127 show a composition bias toward polar residues. The tract at residues histidine 1116–histidine 1135 is disordered. Threonine 1163 carries the phosphothreonine modification. The residue at position 1245 (arginine 1245) is an Omega-N-methylarginine. Disordered regions lie at residues proline 1248–proline 1350, histidine 1360–threonine 1379, leucine 1388–proline 1449, glutamine 1463–threonine 1491, glutamine 1631–asparagine 1655, and glutamine 1743–lysine 1964. Composition is skewed to basic and acidic residues over residues histidine 1268–lysine 1281 and asparagine 1292–aspartate 1308. The span at proline 1365 to alanine 1374 shows a compositional bias: pro residues. Residues leucine 1388–proline 1431 show a composition bias toward low complexity. The segment covering arginine 1635–proline 1644 has biased composition (pro residues). 4 positions are modified to phosphoserine: serine 1636, serine 1760, serine 1763, and serine 1788. Positions serine 1755–proline 1765 are enriched in polar residues. Composition is skewed to polar residues over residues proline 1799–serine 1813 and tryptophan 1826–proline 1849. The segment covering lysine 1860 to serine 1870 has biased composition (basic and acidic residues). Polar residues-rich tracts occupy residues glutamate 1872–methionine 1881 and isoleucine 1897–alanine 1910. The span at proline 1941–serine 1956 shows a compositional bias: low complexity.

It belongs to the DNA2/NAM7 helicase family. As to quaternary structure, interacts with POLR2A. Interacts with SMYD3; the interaction may bridge SMYD3 and RNA polymerase II. Interacts with SMYD2.

The protein resides in the nucleus. Its function is as follows. May act as a helicase that plays a role in RNA metabolism in multiple tissues and organs within the developing embryo. This is Probable helicase with zinc finger domain (Helz) from Mus musculus (Mouse).